We begin with the raw amino-acid sequence, 405 residues long: Phosphoglycerate kinase (405 aa).

Substrate-binding positions include 24 to 26, Arg-40, 63 to 66, Arg-122, and Arg-162; these read DFN and HLGR. ATP is bound by residues Lys-213, Glu-332, and 361-364; that span reads GGDS.

The protein belongs to the phosphoglycerate kinase family. In terms of assembly, monomer.

The protein resides in the cytoplasm. It carries out the reaction (2R)-3-phosphoglycerate + ATP = (2R)-3-phospho-glyceroyl phosphate + ADP. The protein operates within carbohydrate degradation; glycolysis; pyruvate from D-glyceraldehyde 3-phosphate: step 2/5. The sequence is that of Phosphoglycerate kinase from Corynebacterium diphtheriae (strain ATCC 700971 / NCTC 13129 / Biotype gravis).